The chain runs to 468 residues: Siroheme synthase 1 (468 aa).

Residues 1–204 (MDYLPIFCRL…GDKASANQLA (204 aa)) are precorrin-2 dehydrogenase /sirohydrochlorin ferrochelatase. NAD(+) is bound by residues 22 to 23 (EV) and 43 to 44 (PA). Ser-128 is subject to Phosphoserine. The interval 216 to 468 (GEVILVGAGP…NHGVQAAALA (253 aa)) is uroporphyrinogen-III C-methyltransferase. Pro-225 serves as a coordination point for S-adenosyl-L-methionine. Catalysis depends on Asp-248, which acts as the Proton acceptor. Lys-270 serves as the catalytic Proton donor. S-adenosyl-L-methionine is bound by residues 301–303 (GGD), Ile-306, 331–332 (TA), Met-383, and Gly-412.

It in the N-terminal section; belongs to the precorrin-2 dehydrogenase / sirohydrochlorin ferrochelatase family. The protein in the C-terminal section; belongs to the precorrin methyltransferase family.

The catalysed reaction is uroporphyrinogen III + 2 S-adenosyl-L-methionine = precorrin-2 + 2 S-adenosyl-L-homocysteine + H(+). It carries out the reaction precorrin-2 + NAD(+) = sirohydrochlorin + NADH + 2 H(+). The enzyme catalyses siroheme + 2 H(+) = sirohydrochlorin + Fe(2+). The protein operates within cofactor biosynthesis; adenosylcobalamin biosynthesis; precorrin-2 from uroporphyrinogen III: step 1/1. It functions in the pathway cofactor biosynthesis; adenosylcobalamin biosynthesis; sirohydrochlorin from precorrin-2: step 1/1. Its pathway is porphyrin-containing compound metabolism; siroheme biosynthesis; precorrin-2 from uroporphyrinogen III: step 1/1. It participates in porphyrin-containing compound metabolism; siroheme biosynthesis; siroheme from sirohydrochlorin: step 1/1. The protein operates within porphyrin-containing compound metabolism; siroheme biosynthesis; sirohydrochlorin from precorrin-2: step 1/1. Multifunctional enzyme that catalyzes the SAM-dependent methylations of uroporphyrinogen III at position C-2 and C-7 to form precorrin-2 via precorrin-1. Then it catalyzes the NAD-dependent ring dehydrogenation of precorrin-2 to yield sirohydrochlorin. Finally, it catalyzes the ferrochelation of sirohydrochlorin to yield siroheme. The chain is Siroheme synthase 1 from Aeromonas salmonicida (strain A449).